Consider the following 30-residue polypeptide: ILQKAVLDCLKAAGSSLSKAAITAIYNKIT.

Thr30 is modified (threonine amide).

In terms of assembly, homodimer.

The protein resides in the secreted. Shows antibacterial activity against both Gram-positive and Gram-negative bacteria. Its antimicrobial activity is optimal at NaCl concentrations below 100 mM, suggesting that the antimicrobial actions of this peptide may take place intracellularly rather than extracellularly. Has no activity against the fungus C.albicans. Has modest hemolytic activity. In Halocynthia aurantium (Sea peach), this protein is Dicynthaurin.